A 401-amino-acid chain; its full sequence is MNEVVQTPAIQPLPKSAPTAGKQNLLDLDRAGLEKFFVEVLGEKKFRAHQVMKWIHHRYVTEFDEMTDLGKVLRAKLQEHAEVLVPNIVFDKPSADGTHKWLLAMGVDGKNAIETVYIPDKTRGTLCVSSQVGCGLNCTFCSTATQGFNRNLTTAEIIGQVWIAARHLGNVPHQMRRLTNVVMMGMGEPLMNFDNVVRAMSVMRDDLGYGLANKRVTLSTSGLVPQIDRLSTESDVSLAVSLHAPNDALRETLVPLNKKYPIAELMASCARYLRANKRRESVTFEYTLMKGINDKPEHARELARLMRQFDNAVQAKDSGKVNLIPFNPFPGTRYERSEEAHIRAFQKILLDSNVLTMVRRTRGDDIDAACGQLKGQVMDRTRRQAEFNKTLQAGKGSDAAA.

Catalysis depends on E114, which acts as the Proton acceptor. A Radical SAM core domain is found at 120 to 365 (DKTRGTLCVS…TMVRRTRGDD (246 aa)). C127 and C370 are disulfide-bonded. Residues C134, C138, and C141 each coordinate [4Fe-4S] cluster. Residues 187 to 188 (GE), S219, 241 to 243 (SLH), and N327 each bind S-adenosyl-L-methionine. The active-site S-methylcysteine intermediate is C370.

Belongs to the radical SAM superfamily. RlmN family. It depends on [4Fe-4S] cluster as a cofactor.

The protein localises to the cytoplasm. The enzyme catalyses adenosine(2503) in 23S rRNA + 2 reduced [2Fe-2S]-[ferredoxin] + 2 S-adenosyl-L-methionine = 2-methyladenosine(2503) in 23S rRNA + 5'-deoxyadenosine + L-methionine + 2 oxidized [2Fe-2S]-[ferredoxin] + S-adenosyl-L-homocysteine. It carries out the reaction adenosine(37) in tRNA + 2 reduced [2Fe-2S]-[ferredoxin] + 2 S-adenosyl-L-methionine = 2-methyladenosine(37) in tRNA + 5'-deoxyadenosine + L-methionine + 2 oxidized [2Fe-2S]-[ferredoxin] + S-adenosyl-L-homocysteine. Functionally, specifically methylates position 2 of adenine 2503 in 23S rRNA and position 2 of adenine 37 in tRNAs. m2A2503 modification seems to play a crucial role in the proofreading step occurring at the peptidyl transferase center and thus would serve to optimize ribosomal fidelity. This is Dual-specificity RNA methyltransferase RlmN from Stenotrophomonas maltophilia (strain R551-3).